The primary structure comprises 141 residues: Brain ribonuclease (141 aa).

The disordered stretch occupies residues K1–Y25. K7 and R10 together coordinate substrate. The active-site Proton acceptor is H12. A compositionally biased stretch (low complexity) spans S15–N24. Cystine bridges form between C26-C84, C40-C95, C58-C110, and C65-C72. K41–T45 contacts substrate. An N-linked (GlcNAc...) asparagine glycan is attached at N62. The substrate site is built by K66 and R85. H119 functions as the Proton donor in the catalytic mechanism. Residue T129 is glycosylated (O-linked (GalNAc...) threonine).

Belongs to the pancreatic ribonuclease family.

It is found in the secreted. In Giraffa camelopardalis (Giraffe), this protein is Brain ribonuclease (BRN).